The chain runs to 230 residues: Carbohydrate deacetylase (230 aa).

Mg(2+) is bound by residues His-59 and His-123.

This sequence belongs to the YdjC deacetylase family. As to quaternary structure, homodimer. The cofactor is Mg(2+).

In terms of biological role, probably catalyzes the deacetylation of acetylated carbohydrates an important step in the degradation of oligosaccharides. In Oceanobacillus iheyensis (strain DSM 14371 / CIP 107618 / JCM 11309 / KCTC 3954 / HTE831), this protein is Carbohydrate deacetylase.